Reading from the N-terminus, the 200-residue chain is Recombination protein RecR (200 aa).

The segment at 57–72 (CRQCRTLTEQELCPQC) adopts a C4-type zinc-finger fold. The region spanning 80–175 (TQLCVVEGPT…AATRIAHGVP (96 aa)) is the Toprim domain.

This sequence belongs to the RecR family.

Functionally, may play a role in DNA repair. It seems to be involved in an RecBC-independent recombinational process of DNA repair. It may act with RecF and RecO. The polypeptide is Recombination protein RecR (Pseudomonas putida (strain GB-1)).